A 438-amino-acid chain; its full sequence is Cell division cycle-associated 7-like protein (438 aa).

An Integrase domain-binding motif 1 (IBM1) motif is present at residues 9 to 33 (IPKEVADIFNAPSDDEEFVGFQDDV). A Phosphoserine modification is found at Ser21. Positions 55–114 (ACLHSKYFTEELRRIFKEDTDSDNEDFEGFTESELNIGSNPELIESELSDGDKTHPMMSD) are PSIP1-binding. The short motif at 62–88 (FTEELRRIFKEDTDSDNEDFEGFTESE) is the Integrase domain-binding motif 2 (IBM2) element. A disordered region spans residues 72–199 (EDTDSDNEDF…ESRAESQETS (128 aa)). Thr74 bears the Phosphothreonine mark. Positions 74–85 (TDSDNEDFEGFT) are enriched in acidic residues. Ser76 carries the phosphoserine modification. A Phosphothreonine modification is found at Thr85. A phosphoserine mark is found at Ser100, Ser103, Ser113, Ser135, Ser136, Ser183, and Ser185. Residues 113–123 (SDEEDDDDEEE) show a composition bias toward acidic residues. Residues 166–183 (TDLRREKSCRQPKEKEDS) are compositionally biased toward basic and acidic residues. The tract at residues 201–223 (ALLKRAMNIKENKAMLAQLLAEL) is MYC-binding. Residues Lys210 and Lys213 each participate in a glycyl lysine isopeptide (Lys-Gly) (interchain with G-Cter in SUMO2) cross-link. Ser249 bears the Phosphoserine mark.

Interacts with MYC. Interacts (via IBM motifs) with PSIP1 (via IBD domain); phosphorylation increases its affinity for PSIP1. Phosphorylation increases its interaction with PSIP1.

It localises to the cytoplasm. It is found in the nucleus. Plays a role in transcriptional regulation as a repressor that inhibits monoamine oxidase A (MAOA) activity and gene expression by binding to the promoter. Plays an important oncogenic role in mediating the full transforming effect of MYC in medulloblastoma cells. Involved in apoptotic signaling pathways; May act downstream of P38-kinase and BCL-2, but upstream of CASP3/caspase-3 as well as CCND1/cyclin D1 and E2F1. The sequence is that of Cell division cycle-associated 7-like protein (Cdca7l) from Rattus norvegicus (Rat).